We begin with the raw amino-acid sequence, 542 residues long: Chaperonin GroEL 2 (542 aa).

ATP-binding positions include T30–P33, K51, D87–T91, G415, and D496.

The protein belongs to the chaperonin (HSP60) family. As to quaternary structure, forms a cylinder of 14 subunits composed of two heptameric rings stacked back-to-back. Interacts with the co-chaperonin GroES.

The protein localises to the cytoplasm. It catalyses the reaction ATP + H2O + a folded polypeptide = ADP + phosphate + an unfolded polypeptide.. In terms of biological role, together with its co-chaperonin GroES, plays an essential role in assisting protein folding. The GroEL-GroES system forms a nano-cage that allows encapsulation of the non-native substrate proteins and provides a physical environment optimized to promote and accelerate protein folding. This chain is Chaperonin GroEL 2, found in Mesorhizobium japonicum (strain LMG 29417 / CECT 9101 / MAFF 303099) (Mesorhizobium loti (strain MAFF 303099)).